Here is a 257-residue protein sequence, read N- to C-terminus: Aspartate/glutamate leucyltransferase (257 aa).

The protein belongs to the R-transferase family. Bpt subfamily.

It is found in the cytoplasm. It carries out the reaction N-terminal L-glutamyl-[protein] + L-leucyl-tRNA(Leu) = N-terminal L-leucyl-L-glutamyl-[protein] + tRNA(Leu) + H(+). The catalysed reaction is N-terminal L-aspartyl-[protein] + L-leucyl-tRNA(Leu) = N-terminal L-leucyl-L-aspartyl-[protein] + tRNA(Leu) + H(+). Functions in the N-end rule pathway of protein degradation where it conjugates Leu from its aminoacyl-tRNA to the N-termini of proteins containing an N-terminal aspartate or glutamate. This chain is Aspartate/glutamate leucyltransferase, found in Sphingopyxis alaskensis (strain DSM 13593 / LMG 18877 / RB2256) (Sphingomonas alaskensis).